A 283-amino-acid polypeptide reads, in one-letter code: Nucleoid occlusion protein (283 aa).

Positions 1–26 (MKQPFSRLFGFGDKQDQEMETGKQEE) are disordered. Positions 13–26 (DKQDQEMETGKQEE) are enriched in basic and acidic residues. Positions 143-162 (ESLAQRLGKGQSTIANKLRL) form a DNA-binding region, H-T-H motif.

The protein belongs to the ParB family.

It is found in the cytoplasm. The protein localises to the nucleoid. Functionally, effects nucleoid occlusion by binding relatively nonspecifically to DNA and preventing the assembly of the division machinery in the vicinity of the nucleoid, especially under conditions that disturb the cell cycle. It helps to coordinate cell division and chromosome segregation by preventing the formation of the Z ring through the nucleoid, which would cause chromosome breakage. This is Nucleoid occlusion protein from Halalkalibacterium halodurans (strain ATCC BAA-125 / DSM 18197 / FERM 7344 / JCM 9153 / C-125) (Bacillus halodurans).